A 506-amino-acid chain; its full sequence is Histidine ammonia-lyase (506 aa).

A cross-link (5-imidazolinone (Ala-Gly)) is located at residues 143 to 145 (ASG). Serine 144 is modified (2,3-didehydroalanine (Ser)).

Belongs to the PAL/histidase family. Post-translationally, contains an active site 4-methylidene-imidazol-5-one (MIO), which is formed autocatalytically by cyclization and dehydration of residues Ala-Ser-Gly.

It localises to the cytoplasm. It carries out the reaction L-histidine = trans-urocanate + NH4(+). The protein operates within amino-acid degradation; L-histidine degradation into L-glutamate; N-formimidoyl-L-glutamate from L-histidine: step 1/3. The protein is Histidine ammonia-lyase of Salmonella typhimurium (strain LT2 / SGSC1412 / ATCC 700720).